Here is a 482-residue protein sequence, read N- to C-terminus: Long chain base biosynthesis protein 1 (482 aa).

A helical membrane pass occupies residues 32 to 52 (VPIRGHFFVEGLLGVVIIILL).

Belongs to the class-II pyridoxal-phosphate-dependent aminotransferase family. In terms of assembly, heterodimer with LCB2 (LCB2a or LCB2b). Component of the serine palmitoyltransferase (SPT) complex, composed of LCB1 and LCB2 (LCB2a or LCB2b). Requires pyridoxal 5'-phosphate as cofactor. As to expression, ubiquitous.

The protein resides in the endoplasmic reticulum membrane. The enzyme catalyses L-serine + hexadecanoyl-CoA + H(+) = 3-oxosphinganine + CO2 + CoA. Its pathway is lipid metabolism; sphingolipid metabolism. In terms of biological role, component of serine palmitoyltransferase (SPT), which catalyzes the committed step in the synthesis of sphingolipids, the condensation of serine with palmitoyl CoA to form the long chain base 3-ketosphinganine. The heterodimer formed with LCB2 constitutes the catalytic core. Involved in the regulation of the programmed cell death (PCD) signaling pathway. Plays an important role during male gametogenesis and embryogenesis. The sequence is that of Long chain base biosynthesis protein 1 (LCB1) from Arabidopsis thaliana (Mouse-ear cress).